The following is a 549-amino-acid chain: Glucose-6-phosphate isomerase (549 aa).

The active-site Proton donor is Glu355. Catalysis depends on residues His386 and Lys514.

The protein belongs to the GPI family.

The protein resides in the cytoplasm. It catalyses the reaction alpha-D-glucose 6-phosphate = beta-D-fructose 6-phosphate. It functions in the pathway carbohydrate biosynthesis; gluconeogenesis. Its pathway is carbohydrate degradation; glycolysis; D-glyceraldehyde 3-phosphate and glycerone phosphate from D-glucose: step 2/4. In terms of biological role, catalyzes the reversible isomerization of glucose-6-phosphate to fructose-6-phosphate. The sequence is that of Glucose-6-phosphate isomerase from Edwardsiella ictaluri (strain 93-146).